The sequence spans 148 residues: Probable DNA-directed RNA polymerases I, II, and III subunit RPABC3 (148 aa).

Residues Asp16 to Ile40 form a non-specific ssDNA binding region.

The protein belongs to the eukaryotic RPB8 RNA polymerase subunit family. In terms of assembly, component of the RNA polymerase I (Pol I), RNA polymerase II (Pol II) and RNA polymerase III (Pol III) complexes consisting of at least 13, 12 and 17 subunits, respectively. Directly interacts with POLR2A.

The protein localises to the nucleus. In terms of biological role, DNA-dependent RNA polymerase catalyzes the transcription of DNA into RNA using the four ribonucleoside triphosphates as substrates. Common component of RNA polymerases I, II and III which synthesize ribosomal RNA precursors, mRNA precursors and many functional non-coding RNAs, and small RNAs, such as 5S rRNA and tRNAs, respectively. In Caenorhabditis briggsae, this protein is Probable DNA-directed RNA polymerases I, II, and III subunit RPABC3.